A 292-amino-acid polypeptide reads, in one-letter code: Glycine--tRNA ligase alpha subunit (292 aa).

The protein belongs to the class-II aminoacyl-tRNA synthetase family. Tetramer of two alpha and two beta subunits.

It localises to the cytoplasm. The catalysed reaction is tRNA(Gly) + glycine + ATP = glycyl-tRNA(Gly) + AMP + diphosphate. This is Glycine--tRNA ligase alpha subunit from Pelobacter propionicus (strain DSM 2379 / NBRC 103807 / OttBd1).